Reading from the N-terminus, the 686-residue chain is AsmA family protein YhjG (686 aa).

Topologically, residues 1–6 are cytoplasmic; that stretch reads MSKAGK. A helical transmembrane segment spans residues 7–27; sequence ITAAISGAFLLLIVVAIILIA. The Periplasmic portion of the chain corresponds to 28-686; sequence TFDWNRLKPT…CRTILSQMKK (659 aa). The segment at 372–396 is disordered; the sequence is VDSGKGAEKSKRSEQKKGEKSVQPA. Residues 376–391 are compositionally biased toward basic and acidic residues; sequence KGAEKSKRSEQKKGEK.

It belongs to the AsmA family.

It is found in the cell inner membrane. The protein is AsmA family protein YhjG (yhjG) of Escherichia coli (strain K12).